The chain runs to 219 residues: Elongation factor Ts (219 aa).

The tract at residues 82-85 (TDFV) is involved in Mg(2+) ion dislocation from EF-Tu.

The protein belongs to the EF-Ts family.

It is found in the cytoplasm. In terms of biological role, associates with the EF-Tu.GDP complex and induces the exchange of GDP to GTP. It remains bound to the aminoacyl-tRNA.EF-Tu.GTP complex up to the GTP hydrolysis stage on the ribosome. This is Elongation factor Ts from Synechococcus sp. (strain CC9902).